The sequence spans 170 residues: Lipoprotein signal peptidase (170 aa).

Transmembrane regions (helical) follow at residues 12–32, 67–87, and 94–113; these read WYWV…WVLS, WQRW…SVWL, and MWRL…GNLI. Residues Asp-123 and Asp-141 contribute to the active site. A helical membrane pass occupies residues 139–159; sequence IADSAICVGAGLIILDSFVAG.

This sequence belongs to the peptidase A8 family.

The protein localises to the cell inner membrane. It carries out the reaction Release of signal peptides from bacterial membrane prolipoproteins. Hydrolyzes -Xaa-Yaa-Zaa-|-(S,diacylglyceryl)Cys-, in which Xaa is hydrophobic (preferably Leu), and Yaa (Ala or Ser) and Zaa (Gly or Ala) have small, neutral side chains.. Its pathway is protein modification; lipoprotein biosynthesis (signal peptide cleavage). Functionally, this protein specifically catalyzes the removal of signal peptides from prolipoproteins. The protein is Lipoprotein signal peptidase of Shewanella pealeana (strain ATCC 700345 / ANG-SQ1).